The primary structure comprises 75 residues: UPF0352 protein YejL (75 aa).

The protein belongs to the UPF0352 family.

This chain is UPF0352 protein YejL, found in Shigella flexneri.